Reading from the N-terminus, the 464-residue chain is ATP synthase subunit beta (464 aa).

152–159 (GGAGVGKS) contacts ATP.

The protein belongs to the ATPase alpha/beta chains family. As to quaternary structure, F-type ATPases have 2 components, CF(1) - the catalytic core - and CF(0) - the membrane proton channel. CF(1) has five subunits: alpha(3), beta(3), gamma(1), delta(1), epsilon(1). CF(0) has three main subunits: a(1), b(2) and c(9-12). The alpha and beta chains form an alternating ring which encloses part of the gamma chain. CF(1) is attached to CF(0) by a central stalk formed by the gamma and epsilon chains, while a peripheral stalk is formed by the delta and b chains.

It is found in the cell membrane. It catalyses the reaction ATP + H2O + 4 H(+)(in) = ADP + phosphate + 5 H(+)(out). In terms of biological role, produces ATP from ADP in the presence of a proton gradient across the membrane. The catalytic sites are hosted primarily by the beta subunits. The polypeptide is ATP synthase subunit beta (Protochlamydia amoebophila (strain UWE25)).